The sequence spans 620 residues: 1-deoxy-D-xylulose-5-phosphate synthase (620 aa).

Residues histidine 80 and 121 to 123 (GHS) each bind thiamine diphosphate. Aspartate 152 contributes to the Mg(2+) binding site. Thiamine diphosphate is bound by residues 153-154 (GA), asparagine 181, tyrosine 288, and glutamate 370. Asparagine 181 lines the Mg(2+) pocket.

This sequence belongs to the transketolase family. DXPS subfamily. As to quaternary structure, homodimer. It depends on Mg(2+) as a cofactor. Thiamine diphosphate serves as cofactor.

The catalysed reaction is D-glyceraldehyde 3-phosphate + pyruvate + H(+) = 1-deoxy-D-xylulose 5-phosphate + CO2. The protein operates within metabolic intermediate biosynthesis; 1-deoxy-D-xylulose 5-phosphate biosynthesis; 1-deoxy-D-xylulose 5-phosphate from D-glyceraldehyde 3-phosphate and pyruvate: step 1/1. Catalyzes the acyloin condensation reaction between C atoms 2 and 3 of pyruvate and glyceraldehyde 3-phosphate to yield 1-deoxy-D-xylulose-5-phosphate (DXP). This chain is 1-deoxy-D-xylulose-5-phosphate synthase, found in Escherichia coli O157:H7.